Consider the following 269-residue polypeptide: tRNA-cytidine(32) 2-sulfurtransferase (269 aa).

A PP-loop motif motif is present at residues Ser-53 to Ser-58. Residues Cys-128, Cys-131, and Cys-218 each coordinate [4Fe-4S] cluster.

Belongs to the TtcA family. As to quaternary structure, homodimer. Mg(2+) serves as cofactor. [4Fe-4S] cluster is required as a cofactor.

It is found in the cytoplasm. It carries out the reaction cytidine(32) in tRNA + S-sulfanyl-L-cysteinyl-[cysteine desulfurase] + AH2 + ATP = 2-thiocytidine(32) in tRNA + L-cysteinyl-[cysteine desulfurase] + A + AMP + diphosphate + H(+). Its pathway is tRNA modification. Its function is as follows. Catalyzes the ATP-dependent 2-thiolation of cytidine in position 32 of tRNA, to form 2-thiocytidine (s(2)C32). The sulfur atoms are provided by the cysteine/cysteine desulfurase (IscS) system. In Pelobacter propionicus (strain DSM 2379 / NBRC 103807 / OttBd1), this protein is tRNA-cytidine(32) 2-sulfurtransferase.